The following is a 173-amino-acid chain: Protein tyrosine phosphatase type IVA 1 (173 aa).

The region spanning 8–161 (APVEVTYKNM…YRPKMRLRFK (154 aa)) is the Tyrosine-protein phosphatase domain. The cysteines at positions 49 and 104 are disulfide-linked. The Proton donor role is filled by D72. The interval 97 to 132 (GCCIAVHCVAGLGRAPVLVALALIEGGMKYEDAVQF) is interaction with ATF5. C104 (phosphocysteine intermediate) is an active-site residue. 105–110 (VAGLGR) contributes to the phosphate binding site. Substrate is bound at residue R110. C170 is modified (cysteine methyl ester). C170 carries the S-farnesyl cysteine lipid modification. Positions 171 to 173 (CIQ) are cleaved as a propeptide — removed in mature form.

It belongs to the protein-tyrosine phosphatase family. As to quaternary structure, homotrimer. Interacts with ATF5. Interacts with tubulin. In terms of processing, farnesylated. Farnesylation is required for membrane targeting. Unfarnesylated forms are shifted into the nucleus. Expressed in bone marrow, lymph nodes, T lymphocytes, spleen, thymus and tonsil. Overexpressed in tumor cell lines.

It is found in the cell membrane. The protein localises to the early endosome. The protein resides in the endoplasmic reticulum. Its subcellular location is the cytoplasm. It localises to the cytoskeleton. It is found in the spindle. The protein localises to the nucleus. The enzyme catalyses O-phospho-L-tyrosyl-[protein] + H2O = L-tyrosyl-[protein] + phosphate. Its activity is regulated as follows. Inhibited by sodium orthovanadate and pentamidine. Functionally, protein tyrosine phosphatase which stimulates progression from G1 into S phase during mitosis. May play a role in the development and maintenance of differentiating epithelial tissues. Enhances cell proliferation, cell motility and invasive activity, and promotes cancer metastasis. The polypeptide is Protein tyrosine phosphatase type IVA 1 (PTP4A1) (Homo sapiens (Human)).